The following is an 89-amino-acid chain: Small ribosomal subunit protein uS15 (89 aa).

The protein belongs to the universal ribosomal protein uS15 family. As to quaternary structure, part of the 30S ribosomal subunit. Forms a bridge to the 50S subunit in the 70S ribosome, contacting the 23S rRNA.

Functionally, one of the primary rRNA binding proteins, it binds directly to 16S rRNA where it helps nucleate assembly of the platform of the 30S subunit by binding and bridging several RNA helices of the 16S rRNA. In terms of biological role, forms an intersubunit bridge (bridge B4) with the 23S rRNA of the 50S subunit in the ribosome. This is Small ribosomal subunit protein uS15 from Staphylococcus epidermidis (strain ATCC 12228 / FDA PCI 1200).